Reading from the N-terminus, the 578-residue chain is Isocitrate dehydrogenase kinase/phosphatase (578 aa).

ATP-binding positions include 315 to 321 (APGIRGM) and lysine 336. Aspartate 371 is a catalytic residue.

Belongs to the AceK family.

Its subcellular location is the cytoplasm. The catalysed reaction is L-seryl-[isocitrate dehydrogenase] + ATP = O-phospho-L-seryl-[isocitrate dehydrogenase] + ADP + H(+). In terms of biological role, bifunctional enzyme which can phosphorylate or dephosphorylate isocitrate dehydrogenase (IDH) on a specific serine residue. This is a regulatory mechanism which enables bacteria to bypass the Krebs cycle via the glyoxylate shunt in response to the source of carbon. When bacteria are grown on glucose, IDH is fully active and unphosphorylated, but when grown on acetate or ethanol, the activity of IDH declines drastically concomitant with its phosphorylation. The sequence is that of Isocitrate dehydrogenase kinase/phosphatase from Escherichia coli (strain ATCC 8739 / DSM 1576 / NBRC 3972 / NCIMB 8545 / WDCM 00012 / Crooks).